The sequence spans 61 residues: Protein translocase subunit SecE (61 aa).

Residues 39 to 59 (LGILVIGLVGMLIRIIGILML) traverse the membrane as a helical segment.

This sequence belongs to the SecE/SEC61-gamma family. Component of the Sec protein translocase complex. Heterotrimer consisting of SecY (alpha), SecG (beta) and SecE (gamma) subunits. The heterotrimers can form oligomers, although 1 heterotrimer is thought to be able to translocate proteins. Interacts with the ribosome. May interact with SecDF, and other proteins may be involved.

The protein resides in the cell membrane. Essential subunit of the Sec protein translocation channel SecYEG. Clamps together the 2 halves of SecY. May contact the channel plug during translocation. This Pyrococcus horikoshii (strain ATCC 700860 / DSM 12428 / JCM 9974 / NBRC 100139 / OT-3) protein is Protein translocase subunit SecE.